Here is a 349-residue protein sequence, read N- to C-terminus: Phosphoribosylformylglycinamidine cyclo-ligase (349 aa).

This sequence belongs to the AIR synthase family.

It is found in the cytoplasm. It carries out the reaction 2-formamido-N(1)-(5-O-phospho-beta-D-ribosyl)acetamidine + ATP = 5-amino-1-(5-phospho-beta-D-ribosyl)imidazole + ADP + phosphate + H(+). Its pathway is purine metabolism; IMP biosynthesis via de novo pathway; 5-amino-1-(5-phospho-D-ribosyl)imidazole from N(2)-formyl-N(1)-(5-phospho-D-ribosyl)glycinamide: step 2/2. This Methanococcus maripaludis (strain C5 / ATCC BAA-1333) protein is Phosphoribosylformylglycinamidine cyclo-ligase.